The primary structure comprises 222 residues: MKFFIDTADLDEIRSAAELGMLDGVTTNPSLIAKIVKDPSNFTRTDFFDHIAAICDLVDGPVSAEVTSLDTASMIKEGEALAAIHDNVVVKCPLTIDGLKAIRHLSEAGIATNATLVFSPSQAILAAKAGASFVSPFVGRLDDISTDGMALVEDIVDIYDNYGYMAEVIVASVRHPQHVVEAARIGADIATIPFSVISRLAVHPLTESGLKKFMEDASVIKP.

Lys-91 acts as the Schiff-base intermediate with substrate in catalysis.

It belongs to the transaldolase family. Type 3B subfamily.

Its subcellular location is the cytoplasm. It carries out the reaction D-sedoheptulose 7-phosphate + D-glyceraldehyde 3-phosphate = D-erythrose 4-phosphate + beta-D-fructose 6-phosphate. Its pathway is carbohydrate degradation; pentose phosphate pathway; D-glyceraldehyde 3-phosphate and beta-D-fructose 6-phosphate from D-ribose 5-phosphate and D-xylulose 5-phosphate (non-oxidative stage): step 2/3. Functionally, transaldolase is important for the balance of metabolites in the pentose-phosphate pathway. In Chlorobium phaeovibrioides (strain DSM 265 / 1930) (Prosthecochloris vibrioformis (strain DSM 265)), this protein is Probable transaldolase.